The sequence spans 804 residues: MTNSNSITPVMQQYVTLKQQYKEYLLFYRLGDFYELFFDDAIKTSKILNIVLTKKGNVPMCGVPFHSSETYLNKLVKLGYKIAICEQLETSEEARKRGYKSLVKRDVVRIVTPGTIVEDSLLEAKESNYLACIVMIKDSCAIAWLELSTGLFCYHMTYISKLDSDLLRIGPKELLVADDLLEIEAVYSIIKKYRFSITQYSSSFFDENRAYNTLCNVYGVSTLKGLGDLKGVEISVCGSLLEYVIATQKGSLPKLGFPKAYVQSDFMFIDAAALRNLELFSTQSGELEGSLIASIDFTVTASGGRLLKRCLSAPLASADAINRRLSVVEFFVNNQNLYKSVRQVLRGIADIERILTRVKIARCSPKDLYSLKLTLEKTCELVELLCKFNIDIISEFCLRLGRYEDLICILNNSLLQNSVSSVKDGGFINPECDAQLSEYIYIQECSNQLIQELRDRYRNITNIQSLKILYNNILGYYVEVSSNHLIDDKNFIHRQSLANNVRYTTTELKELESKIISAKDASISLEIKIFGQLCSDVIKYADKITITAHTIAEIDMLTSFAELAVQYSYSKPIIDDSYEFNIKKGKHPVVERNGKFIANDINLSSEQRVHLITGPNMAGKSTFLRQNALIGILAHIGSFVPAEYAHIGVIDKVFSRVGASDNIVCGYSTFMVEMIETAAVINQATERSFVILDEIGRGTGTYDGLSIAWSVIEQIHNVNKSRAIFATHYHELSKLDKYLKHIKCFCMKVEEWDGKVVFLHEIIPGASDKSYGIHVAKLAGFPQSVVNRAEYLMDKLKTNEDLLT.

614-621 (GPNMAGKS) lines the ATP pocket.

This sequence belongs to the DNA mismatch repair MutS family.

Functionally, this protein is involved in the repair of mismatches in DNA. It is possible that it carries out the mismatch recognition step. This protein has a weak ATPase activity. The sequence is that of DNA mismatch repair protein MutS from Ehrlichia ruminantium (strain Welgevonden).